The chain runs to 215 residues: Pyrrolidone-carboxylate peptidase (215 aa).

Active-site residues include Glu-80, Cys-143, and His-167.

Belongs to the peptidase C15 family. As to quaternary structure, homotetramer.

It localises to the cytoplasm. It catalyses the reaction Release of an N-terminal pyroglutamyl group from a polypeptide, the second amino acid generally not being Pro.. Functionally, removes 5-oxoproline from various penultimate amino acid residues except L-proline. The sequence is that of Pyrrolidone-carboxylate peptidase from Bacillus cereus (strain AH820).